A 246-amino-acid polypeptide reads, in one-letter code: Bis(5'-nucleosyl)-tetraphosphatase PrpE [asymmetrical] (246 aa).

Belongs to the PrpE family. Requires Ni(2+) as cofactor.

It carries out the reaction P(1),P(4)-bis(5'-guanosyl) tetraphosphate + H2O = GMP + GTP + 2 H(+). In terms of biological role, asymmetrically hydrolyzes Ap4p to yield AMP and ATP. The polypeptide is Bis(5'-nucleosyl)-tetraphosphatase PrpE [asymmetrical] (Bacillus cereus (strain 03BB102)).